A 468-amino-acid polypeptide reads, in one-letter code: Serine/threonine-protein phosphatase 2A 55 kDa regulatory subunit B beta isoform (468 aa).

7 WD repeats span residues 47–86, 112–153, 196–234, 245–285, 304–342, 359–400, and 435–468; these read SSAD…KNQP, EIEE…KRPE, AHTY…RSFN, ELTE…LCDK, EIIS…RPIE, ENDC…DVTL, and DFSK…DKVN.

It belongs to the phosphatase 2A regulatory subunit B family. As to quaternary structure, PP2A consists of a common heterodimeric core enzyme, composed of a 36 kDa catalytic subunit (subunit C) and a 65 kDa constant regulatory subunit (PR65 or subunit A), that associates with a variety of regulatory subunits.

The protein localises to the cytoplasm. It localises to the cytoskeleton. It is found in the membrane. The B regulatory subunit might modulate substrate selectivity and catalytic activity, and might also direct the localization of the catalytic enzyme to a particular subcellular compartment. Negatively controls the initiation of oocyte maturation. This Xenopus laevis (African clawed frog) protein is Serine/threonine-protein phosphatase 2A 55 kDa regulatory subunit B beta isoform (ppp2r2b).